The chain runs to 186 residues: MSFLTNFLLGLGLAMDAFAVSMSSGTTIRPFRVSDALKLAVFFGSFQAMMPVLGWIGGSTVSSFVSDYAPWIAFLLLAFIGCKMIYEALYGDQDGKVNSLNYSVLFLLAVATSIDALAVGMSFAFLGTPILEPVIIIGCVTFVMSFCGAILGYRLGHFFEHEVEILGGLILIGLGGKILAEHMLWI.

The next 6 membrane-spanning stretches (helical) occupy residues 1–21 (MSFL…FAVS), 39–59 (LAVF…IGGS), 61–81 (VSSF…AFIG), 102–122 (YSVL…VGMS), 134–156 (VIII…YRLG), and 165–185 (ILGG…HMLW).

It belongs to the MntP (TC 9.B.29) family.

It is found in the cell membrane. Functionally, probably functions as a manganese efflux pump. This chain is Putative manganese efflux pump MntP, found in Methanosarcina acetivorans (strain ATCC 35395 / DSM 2834 / JCM 12185 / C2A).